The following is a 428-amino-acid chain: Histidinol dehydrogenase (428 aa).

Residues Tyr-127, Gln-189, and Asn-212 each coordinate NAD(+). Residues Ser-235, Gln-257, and His-260 each contribute to the substrate site. 2 residues coordinate Zn(2+): Gln-257 and His-260. Residues Glu-325 and His-326 each act as proton acceptor in the active site. Substrate-binding residues include His-326, Asp-359, Glu-413, and His-418. Asp-359 serves as a coordination point for Zn(2+). Residue His-418 participates in Zn(2+) binding.

This sequence belongs to the histidinol dehydrogenase family. Zn(2+) serves as cofactor.

The catalysed reaction is L-histidinol + 2 NAD(+) + H2O = L-histidine + 2 NADH + 3 H(+). It participates in amino-acid biosynthesis; L-histidine biosynthesis; L-histidine from 5-phospho-alpha-D-ribose 1-diphosphate: step 9/9. Functionally, catalyzes the sequential NAD-dependent oxidations of L-histidinol to L-histidinaldehyde and then to L-histidine. This is Histidinol dehydrogenase from Prochlorococcus marinus subsp. pastoris (strain CCMP1986 / NIES-2087 / MED4).